A 153-amino-acid polypeptide reads, in one-letter code: Ribosomal RNA large subunit methyltransferase H (153 aa).

Residues Leu-71 and Gly-102 each contribute to the S-adenosyl-L-methionine site.

The protein belongs to the RNA methyltransferase RlmH family. Homodimer.

The protein localises to the cytoplasm. The catalysed reaction is pseudouridine(1915) in 23S rRNA + S-adenosyl-L-methionine = N(3)-methylpseudouridine(1915) in 23S rRNA + S-adenosyl-L-homocysteine + H(+). Specifically methylates the pseudouridine at position 1915 (m3Psi1915) in 23S rRNA. The sequence is that of Ribosomal RNA large subunit methyltransferase H from Anaeromyxobacter sp. (strain K).